The chain runs to 539 residues: T-complex protein 1 subunit zeta (539 aa).

Belongs to the TCP-1 chaperonin family. Heterooligomeric complex of about 850 to 900 kDa that forms two stacked rings, 12 to 16 nm in diameter.

The protein localises to the cytoplasm. Molecular chaperone; assists the folding of proteins upon ATP hydrolysis. Known to play a role, in vitro, in the folding of actin and tubulin. The protein is T-complex protein 1 subunit zeta (cct-6) of Caenorhabditis elegans.